A 190-amino-acid polypeptide reads, in one-letter code: Cytoplasmic envelopment protein 3 (190 aa).

Glycine 2 is lipidated: N-myristoyl glycine; by host. Residues 14–190 (GTTSGEPLKD…TKKPAASLPF (177 aa)) are disordered. Over residues 30-43 (SLRSYDNIPPTSSS) the composition is skewed to polar residues. A compositionally biased stretch (acidic residues) spans 44–58 (DEGEDDDDGEDDDNE). Basic and acidic residues predominate over residues 80 to 90 (SHREATHDGPK). A compositionally biased stretch (basic residues) spans 108–123 (KQSKKKKKPSKHHHHQ). Over residues 130–139 (ETDDLDEEDT) the composition is skewed to acidic residues.

It belongs to the herpesviridae cytoplasmic envelopment protein 3 family. In terms of assembly, interacts with cytoplasmic envelopment protein 2; this interaction is essential for the proper localization of each protein to the assembly complex and thus for the production of infectious virus. Post-translationally, myristoylation and palmitoylation (probably on one or more of the nearby cysteines at the N-terminus) enable membrane-binding and Golgi apparatus-specific targeting and are essential for efficient packaging. In terms of processing, phosphorylated. Phosphorylation does not seem to be required for recycling to the host Golgi apparatus. Packaging is selective for underphosphorylated forms.

The protein resides in the virion tegument. It is found in the virion membrane. It localises to the host cell membrane. Its subcellular location is the host Golgi apparatus membrane. In terms of biological role, plays an important role in the cytoplasmic envelopment of tegument proteins and capsids during the assembly and egress processes. Also participates in viral entry at the fusion step probably by regulating the core fusion machinery. This chain is Cytoplasmic envelopment protein 3 (UL99), found in Human cytomegalovirus (strain Merlin) (HHV-5).